We begin with the raw amino-acid sequence, 396 residues long: Alanine racemase (396 aa).

Catalysis depends on K46, which acts as the Proton acceptor; specific for D-alanine. K46 bears the N6-(pyridoxal phosphate)lysine mark. R145 is a substrate binding site. The active-site Proton acceptor; specific for L-alanine is the Y280. Substrate is bound at residue M328.

It belongs to the alanine racemase family. It depends on pyridoxal 5'-phosphate as a cofactor.

It carries out the reaction L-alanine = D-alanine. The protein operates within amino-acid biosynthesis; D-alanine biosynthesis; D-alanine from L-alanine: step 1/1. Its function is as follows. Catalyzes the interconversion of L-alanine and D-alanine. May also act on other amino acids. This Brucella suis (strain ATCC 23445 / NCTC 10510) protein is Alanine racemase (alr).